The chain runs to 470 residues: UDP-N-acetylmuramoylalanine--D-glutamate ligase (470 aa).

Residue 121-127 (GTNGKST) participates in ATP binding.

This sequence belongs to the MurCDEF family.

Its subcellular location is the cytoplasm. It carries out the reaction UDP-N-acetyl-alpha-D-muramoyl-L-alanine + D-glutamate + ATP = UDP-N-acetyl-alpha-D-muramoyl-L-alanyl-D-glutamate + ADP + phosphate + H(+). It functions in the pathway cell wall biogenesis; peptidoglycan biosynthesis. Its function is as follows. Cell wall formation. Catalyzes the addition of glutamate to the nucleotide precursor UDP-N-acetylmuramoyl-L-alanine (UMA). The chain is UDP-N-acetylmuramoylalanine--D-glutamate ligase from Rhizobium johnstonii (strain DSM 114642 / LMG 32736 / 3841) (Rhizobium leguminosarum bv. viciae).